Here is a 198-residue protein sequence, read N- to C-terminus: NAD(P)H dehydrogenase (quinone) (198 aa).

The Flavodoxin-like domain maps to 4-189 (ILVLYYSMYG…AIARYQGEHV (186 aa)). FMN contacts are provided by residues 10–15 (SMYGHI) and 78–80 (TRF). Y12 lines the NAD(+) pocket. Position 98 (W98) interacts with substrate. FMN-binding positions include 113–118 (STGTGG) and H133.

The protein belongs to the WrbA family. It depends on FMN as a cofactor.

The enzyme catalyses a quinone + NADH + H(+) = a quinol + NAD(+). The catalysed reaction is a quinone + NADPH + H(+) = a quinol + NADP(+). The polypeptide is NAD(P)H dehydrogenase (quinone) (Klebsiella pneumoniae (strain 342)).